Reading from the N-terminus, the 2555-residue chain is Neurogenic locus notch homolog protein 1 (2555 aa).

Positions 1-18 are cleaved as a signal peptide; sequence MPPLLAPLLCLALLPALA. Residues 19-1735 lie on the Extracellular side of the membrane; it reads ARGPRCSQPG…VEPPPPAQLH (1717 aa). EGF-like domains are found at residues 20 to 58, 59 to 99, 102 to 139, and 140 to 176; these read RGPR…PRCQ, DPNP…PLCL, LDNA…KSCQ, and QADP…PTCR. 33 cysteine pairs are disulfide-bonded: Cys24/Cys37, Cys31/Cys46, Cys48/Cys57, Cys63/Cys74, Cys68/Cys87, Cys89/Cys98, Cys106/Cys117, Cys111/Cys127, Cys129/Cys138, Cys144/Cys155, Cys149/Cys164, Cys166/Cys175, Cys182/Cys195, Cys189/Cys204, Cys206/Cys215, Cys222/Cys233, Cys227/Cys243, Cys245/Cys254, Cys261/Cys272, Cys266/Cys281, Cys283/Cys292, Cys299/Cys312, Cys306/Cys321, Cys323/Cys332, Cys339/Cys350, Cys344/Cys359, Cys361/Cys370, Cys376/Cys387, Cys381/Cys398, Cys400/Cys409, Cys416/Cys429, Cys423/Cys438, and Cys440/Cys449. The N-linked (GlcNAc...) asparagine glycan is linked to Asn41. Ser65 is a glycosylation site (O-linked (Glc...) serine). The O-linked (Fuc...) threonine glycan is linked to Thr73. Thr116 carries an O-linked (Fuc...) threonine glycan. A glycan (O-linked (Glc...) serine) is linked at Ser146. Residues 178 to 216 enclose the EGF-like 5; calcium-binding domain; the sequence is DVNECGQKPGLCRHGGTCHNEVGSYRCVCRATHTGPNCE. An O-linked (Fuc...) threonine glycan is attached at Thr194. The EGF-like 6 domain occupies 218–255; sequence PYVPCSPSPCQNGGTCRPTGDVTHECACLPGFTGQNCE. Thr232 carries an O-linked (Fuc...) threonine; alternate glycan. O-linked (GalNAc...) threonine; alternate glycosylation occurs at Thr232. One can recognise an EGF-like 7; calcium-binding domain in the interval 257–293; it reads NIDDCPGNNCKNGGACVDGVNTYNCRCPPEWTGQYCT. In terms of domain architecture, EGF-like 8; calcium-binding spans 295–333; the sequence is DVDECQLMPNACQNGGTCHNTHGGYNCVCVNGWTGEDCS. Residue Thr311 is glycosylated (O-linked (Fuc...) threonine). The 37-residue stretch at 335–371 folds into the EGF-like 9; calcium-binding domain; sequence NIDDCASAACFHGATCHDRVASFYCECPHGRTGLLCH. Ser341 carries O-linked (Glc...) serine glycosylation. A glycan (O-linked (Fuc...) threonine) is linked at Thr349. Positions 372–410 constitute an EGF-like 10 domain; that stretch reads LNDACISNPCNEGSNCDTNPVNGKAICTCPSGYTGPACS. O-linked (Glc...) serine glycosylation is present at Ser378. In terms of domain architecture, EGF-like 11; calcium-binding spans 412 to 450; that stretch reads DVDECSLGANPCEHAGKCINTLGSFECQCLQGYTGPRCE. Residues 420–421 are interaction with DLL4; that stretch reads AN. Thr432 and Ser435 together coordinate Ca(2+). Residue Ser435 is glycosylated (O-linked (Glc...) serine). The interaction with DLL4 stretch occupies residues 448 to 452; the sequence is RCEID. Ca(2+) contacts are provided by Asp452, Val453, and Glu455. Residues 452 to 488 form the EGF-like 12; calcium-binding domain; the sequence is DVNECVSNPCQNDATCLDQIGEFQCICMPGYEGVHCE. 3 disulfides stabilise this stretch: Cys456–Cys467, Cys461–Cys476, and Cys478–Cys487. The O-linked (Glc...) serine glycan is linked to Ser458. The O-linked (Fuc...) threonine glycan is linked to Thr466. The Ca(2+) site is built by Asp469 and Gln470. Asn490, Thr491, and Glu493 together coordinate Ca(2+). Residues 490 to 526 form the EGF-like 13; calcium-binding domain; sequence NTDECASSPCLHNGRCLDKINEFQCECPTGFTGHLCQ. 74 cysteine pairs are disulfide-bonded: Cys494–Cys505, Cys499–Cys514, Cys516–Cys525, Cys532–Cys543, Cys537–Cys552, Cys554–Cys563, Cys570–Cys580, Cys575–Cys589, Cys591–Cys600, Cys607–Cys618, Cys612–Cys627, Cys629–Cys638, Cys645–Cys655, Cys650–Cys664, Cys666–Cys675, Cys682–Cys693, Cys687–Cys702, Cys704–Cys713, Cys720–Cys730, Cys725–Cys739, Cys741–Cys750, Cys757–Cys768, Cys762–Cys777, Cys779–Cys788, Cys795–Cys806, Cys800–Cys815, Cys817–Cys826, Cys833–Cys844, Cys838–Cys855, Cys857–Cys866, Cys873–Cys884, Cys878–Cys893, Cys895–Cys904, Cys911–Cys922, Cys916–Cys931, Cys933–Cys942, Cys949–Cys960, Cys954–Cys969, Cys971–Cys980, Cys987–Cys998, Cys992–Cys1007, Cys1009–Cys1018, Cys1025–Cys1036, Cys1030–Cys1045, Cys1047–Cys1056, Cys1063–Cys1074, Cys1068–Cys1083, Cys1085–Cys1094, Cys1101–Cys1122, Cys1116–Cys1131, Cys1133–Cys1142, Cys1149–Cys1160, Cys1154–Cys1169, Cys1171–Cys1180, Cys1187–Cys1198, Cys1192–Cys1207, Cys1209–Cys1218, Cys1238–Cys1253, Cys1255–Cys1264, Cys1271–Cys1284, Cys1276–Cys1293, Cys1295–Cys1304, Cys1311–Cys1322, Cys1316–Cys1334, Cys1336–Cys1345, Cys1352–Cys1363, Cys1357–Cys1372, Cys1374–Cys1383, Cys1391–Cys1403, Cys1397–Cys1414, Cys1416–Cys1425, Cys1449–Cys1472, Cys1454–Cys1467, and Cys1463–Cys1479. A glycan (O-linked (Glc...) serine) is linked at Ser496. 2 residues coordinate Ca(2+): Asp507 and Lys508. An EGF-like 14; calcium-binding domain is found at 528–564; the sequence is DVDECASTPCKNGAKCLDGPNTYTCVCTEGYTGTHCE. A glycan (O-linked (Glc...) serine) is linked at Ser534. The region spanning 566–601 is the EGF-like 15; calcium-binding domain; the sequence is DIDECDPDPCHYGSCKDGVATFTCLCRPGYTGHHCE. In terms of domain architecture, EGF-like 16; calcium-binding spans 603–639; the sequence is NINECSSQPCRHGGTCQDRDNAYLCFCLKGTTGPNCE. An O-linked (Glc...) serine glycan is attached at Ser609. The O-linked (Fuc...) threonine glycan is linked to Thr617. The EGF-like 17; calcium-binding domain occupies 641–676; it reads NLDDCASSPCDSGTCLDKIDGYECACEPGYTGSMCN. Ser647 is a glycosylation site (O-linked (Glc...) serine). Residues 678 to 714 form the EGF-like 18; calcium-binding domain; it reads NIDECAGNPCHNGGTCEDGINGFTCRCPEGYHDPTCL. O-linked (Fuc...) threonine glycosylation is present at Thr692. Positions 716–751 constitute an EGF-like 19; calcium-binding domain; that stretch reads EVNECNSNPCVHGACRDSLNGYKCDCDPGWSGTNCD. The O-linked (Glc...) serine glycan is linked to Ser722. The region spanning 753–789 is the EGF-like 20 domain; that stretch reads NNNECESNPCVNGGTCKDMTSGYVCTCREGFSGPNCQ. An O-linked (Glc...) serine glycan is attached at Ser759. Residue Thr767 is glycosylated (O-linked (Fuc...) threonine). The O-linked (GlcNAc) serine glycan is linked to Ser784. One can recognise an EGF-like 21; calcium-binding domain in the interval 791 to 827; it reads NINECASNPCLNQGTCIDDVAGYKCNCLLPYTGATCE. Ser797 carries O-linked (Glc...) serine glycosylation. Residue Thr805 is glycosylated (O-linked (Fuc...) threonine). The 39-residue stretch at 829-867 folds into the EGF-like 22 domain; that stretch reads VLAPCAPSPCRNGGECRQSEDYESFSCVCPTGWQGQTCE. The EGF-like 23; calcium-binding domain maps to 869–905; it reads DINECVLSPCRHGASCQNTHGGYRCHCQAGYSGRNCE. Residues 907–943 form the EGF-like 24 domain; the sequence is DIDDCRPNPCHNGGSCTDGINTAFCDCLPGFRGTFCE. Ser921 is a glycosylation site (O-linked (Fuc) serine). Residues 945-981 enclose the EGF-like 25; calcium-binding domain; sequence DINECASDPCRNGANCTDCVDSYTCTCPAGFSGIHCE. O-linked (Glc...) serine glycosylation occurs at Ser951. Residue Asn959 is glycosylated (N-linked (GlcNAc...) asparagine). EGF-like domains are found at residues 983–1019, 1021–1057, 1059–1095, 1097–1143, and 1145–1181; these read NTPD…SYCQ, DVNE…PNCQ, LVHW…LYCD, PSVS…SYCE, and LVDE…VNCS. O-linked (Fuc...) threonine glycosylation occurs at Thr997. Ser1027 carries O-linked (Glc...) serine glycosylation. Residue Thr1035 is glycosylated (O-linked (Fuc...) threonine). A glycan (O-linked (Glc...) serine) is linked at Ser1065. Residue Thr1159 is glycosylated (O-linked (Fuc...) threonine). Asn1179 carries N-linked (GlcNAc...) asparagine glycosylation. The EGF-like 31; calcium-binding domain occupies 1183 to 1219; it reads EIDECLSHPCQNGGTCLDLPNTYKCSCPRGTQGVHCE. The O-linked (Glc...) serine glycan is linked to Ser1189. Thr1197 carries an O-linked (Fuc...) threonine glycan. One can recognise an EGF-like 32; calcium-binding domain in the interval 1221-1265; the sequence is NVDDCNPPVDPVSRSPKCFNNGTCVDQVGGYSCTCPPGFVGERCE. N-linked (GlcNAc...) asparagine glycosylation occurs at Asn1241. EGF-like domains are found at residues 1267 to 1305, 1307 to 1346, 1348 to 1384, and 1387 to 1426; these read DVNE…RRCE, VING…ATCE, DART…PECQ, and ASSP…LLCH. O-linked (Glc...) serine glycosylation is present at Ser1273. Thr1362 carries O-linked (Fuc...) threonine glycosylation. Thr1379 is a glycosylation site (O-linked (GlcNAc...) threonine). Residue Thr1402 is glycosylated (O-linked (Fuc...) threonine; alternate). Thr1402 carries O-linked (GalNAc...) threonine; alternate glycosylation. LNR repeat units follow at residues 1449-1489, 1490-1531, and 1532-1571; these read CELP…PWKN, CTQS…CNPL, and YDQY…RLAA. Ca(2+) contacts are provided by Asp1457, Asn1460, Asp1475, and Asp1478. A glycan (N-linked (GlcNAc...) asparagine) is linked at Asn1489. Intrachain disulfides connect Cys1490-Cys1514, Cys1496-Cys1509, Cys1505-Cys1521, Cys1536-Cys1549, and Cys1545-Cys1561. The N-linked (GlcNAc...) asparagine glycan is linked to Asn1587. Residue Thr1725 is glycosylated (O-linked (GalNAc...) threonine). An interaction with PSEN1 region spans residues 1728-1760; the sequence is PPPPAQLHFMYVAAAAFVLLFFVGCGVLLSRKR. A helical membrane pass occupies residues 1736 to 1756; the sequence is FMYVAAAAFVLLFFVGCGVLL. At 1757–2555 the chain is on the cytoplasmic side; that stretch reads SRKRRRQHGQ…QIARIPEAFK (799 aa). Lys1759 participates in a covalent cross-link: Glycyl lysine isopeptide (Lys-Gly) (interchain with G-Cter in ubiquitin). Positions 1780-1808 are disordered; the sequence is KKKRREPLGEDSVGLKPLKNASDGALMDD. Thr1861 bears the Phosphothreonine mark. ANK repeat units follow at residues 1927–1956, 1960–1990, 1994–2023, 2027–2056, 2060–2089, and 2095–2122; these read TGET…DANI, MGRT…DLDA, DGTT…DVNA, LGKS…NKDM, REET…NRDI, and RLPR…VRSP. Positions 1947 to 1955 are HIF1AN-binding; it reads LLEASADAN. Asn1955 is subject to (3S)-3-hydroxyasparagine; by HIF1AN; partial. The HIF1AN-binding stretch occupies residues 2014 to 2022; it reads LINSHADVN. Asn2022 is subject to (3S)-3-hydroxyasparagine; by HIF1AN. 3 disordered regions span residues 2151 to 2194, 2379 to 2447, and 2483 to 2555; these read PGVQ…LDSS, LVQT…QPLG, and TPPS…EAFK. A compositionally biased stretch (low complexity) spans 2379 to 2408; that stretch reads LVQTQQVQPQNLQMQQQNLQPANIQQQQSL. Residues 2483–2502 are compositionally biased toward polar residues; that stretch reads TPPSQHSYSSPVDNTPSHQL. Over residues 2512-2527 the composition is skewed to low complexity; the sequence is PSPESPDQWSSSSPHS. Residues 2528–2547 show a composition bias toward polar residues; sequence NVSDWSEGVSSPPTSMQSQI.

It belongs to the NOTCH family. In terms of assembly, heterodimer of a C-terminal fragment N(TM) and an N-terminal fragment N(EC) which are probably linked by disulfide bonds. Interacts with DNER, DTX1, DTX2 and RBPJ/RBPSUH. Also interacts with MAML1, MAML2 and MAML3 which act as transcriptional coactivators for NOTCH1. The NOTCH1 intracellular domain interacts with SNW1; the interaction involves multimerized NOTCH1 NICD and is implicated in a formation of an intermediate preactivation complex which associates with DNA-bound CBF-1/RBPJ. The activated membrane-bound form interacts with AAK1 which promotes NOTCH1 stabilization. Forms a trimeric complex with FBXW7 and SGK1. Interacts with HIF1AN. HIF1AN negatively regulates the function of notch intracellular domain (NICD), accelerating myogenic differentiation. Interacts (via NICD) with SNAI1 (via zinc fingers); the interaction induces SNAI1 degradation via MDM2-mediated ubiquitination and inhibits SNAI1-induced cell invasion. Interacts (via NICD) with MDM2A. Interacts (via NICD) with BCL6; the interaction decreases MAML1 recruitment by NOTCH1 NICD on target genes DNA and inhibits NOTCH1 transactivation activity. Interacts with THBS4. Interacts (via the EGF-like repeat region) with CCN3 (via CTCK domain). Interacts (via EGF-like domains) with DLL4 (via N-terminal DSL and MNNL domains). Interacts with ZMIZ1. Interacts (via NICD domain) with MEGF10 (via the cytoplasmic domain). Interacts with DLL1 and JAG1. Interacts (via NICD domain) with PRAG1. Forms a complex with PRAG1, N1ICD and MAML1, in a MAML1-dependent manner. Interacts (via transmembrane region) with PSEN1; the interaction is direct. Interacts with ZFP64. Synthesized in the endoplasmic reticulum as an inactive form which is proteolytically cleaved by a furin-like convertase in the trans-Golgi network before it reaches the plasma membrane to yield an active, ligand-accessible form. Cleavage results in a C-terminal fragment N(TM) and a N-terminal fragment N(EC). Following ligand binding, it is cleaved by ADAM17 to yield a membrane-associated intermediate fragment called notch extracellular truncation (NEXT). Following endocytosis, this fragment is then cleaved by one of the catalytic subunits of gamma-secretase (PSEN1 or PSEN2), to release a Notch-derived peptide containing the intracellular domain (NICD) from the membrane. Post-translationally, phosphorylated. In terms of processing, O-glycosylated on the EGF-like domains. O-glucosylated at Ser-435 by KDELC1 and KDELC2. Contains both O-linked fucose and O-linked glucose in the EGF-like domains 11, 12 and 13, which are interacting with the residues on DLL4. O-linked glycosylation by GALNT11 is involved in determination of left/right symmetry: glycosylation promotes activation of NOTCH1, possibly by promoting cleavage by ADAM17, modulating the balance between motile and immotile (sensory) cilia at the left-right organiser (LRO). MFNG-, RFNG- and LFNG-mediated modification of O-fucose residues at specific EGF-like domains results in inhibition of its activation by JAG1 and enhancement of its activation by DLL1 via an increased binding to DLL1. Ubiquitinated. Undergoes 'Lys-29'-linked polyubiquitination by ITCH; promotes the lysosomal degradation of non-activated internalized NOTCH1. Deubiquitination by USP12 is required for transport of internalized non-activated receptor from late endosomes to lysosomes for degradation. Monoubiquitination at Lys-1759 is required for activation by gamma-secretase cleavage, it promotes interaction with AAK1, which stabilizes it. Deubiquitination by EIF3F is necessary for nuclear import of activated Notch. Post-translationally, hydroxylated at Asn-1955 by HIF1AN. Hydroxylated at Asn-2022 by HIF1AN. Hydroxylation reduces affinity for HI1AN and may thus indirectly modulate negative regulation of NICD. In terms of tissue distribution, in fetal tissues most abundant in spleen, brain stem and lung. Also present in most adult tissues where it is found mainly in lymphoid tissues.

It is found in the cell membrane. Its subcellular location is the late endosome membrane. The protein localises to the nucleus. Functionally, functions as a receptor for membrane-bound ligands Jagged-1 (JAG1), Jagged-2 (JAG2) and Delta-1 (DLL1) to regulate cell-fate determination. Upon ligand activation through the released notch intracellular domain (NICD) it forms a transcriptional activator complex with RBPJ/RBPSUH and activates genes of the enhancer of split locus. Affects the implementation of differentiation, proliferation and apoptotic programs. Involved in angiogenesis; negatively regulates endothelial cell proliferation and migration and angiogenic sprouting. Involved in the maturation of both CD4(+) and CD8(+) cells in the thymus. Important for follicular differentiation and possibly cell fate selection within the follicle. During cerebellar development, functions as a receptor for neuronal DNER and is involved in the differentiation of Bergmann glia. Represses neuronal and myogenic differentiation. May play an essential role in postimplantation development, probably in some aspect of cell specification and/or differentiation. May be involved in mesoderm development, somite formation and neurogenesis. May enhance HIF1A function by sequestering HIF1AN away from HIF1A. Required for the THBS4 function in regulating protective astrogenesis from the subventricular zone (SVZ) niche after injury. Involved in determination of left/right symmetry by modulating the balance between motile and immotile (sensory) cilia at the left-right organiser (LRO). In Homo sapiens (Human), this protein is Neurogenic locus notch homolog protein 1 (NOTCH1).